A 1402-amino-acid chain; its full sequence is Roundabout homolog 3 (1402 aa).

A signal peptide spans 1–20; the sequence is MLRYLLKTLLQMNLFADSLA. Residues 21–891 are Extracellular-facing; the sequence is RDISNSSELL…ERLAKVLRKP (871 aa). Residues asparagine 25, asparagine 34, and asparagine 53 are each glycosylated (N-linked (GlcNAc...) asparagine). Ig-like C2-type domains lie at 64 to 160, 166 to 253, 258 to 342, 347 to 440, and 450 to 531; these read PRIV…ASLE, DDFR…AELV, PSFL…GSLS, PQFV…ALLE, and PPII…GEAT. Cysteine 85 and cysteine 143 are disulfide-bonded. Asparagine 156 carries N-linked (GlcNAc...) asparagine glycosylation. 2 cysteine pairs are disulfide-bonded: cysteine 187-cysteine 236 and cysteine 279-cysteine 326. Residues asparagine 355, asparagine 363, asparagine 410, asparagine 459, and asparagine 503 are each glycosylated (N-linked (GlcNAc...) asparagine). Residues cysteine 368 and cysteine 424 are joined by a disulfide bond. A disulfide bond links cysteine 472 and cysteine 521. 2 disordered regions span residues 540-561 and 639-662; these read EDWG…PPSQ and EPSP…EDPW. Residues 543 to 552 show a composition bias toward low complexity; that stretch reads GASPGPATGP. 3 Fibronectin type-III domains span residues 558–652, 672–766, and 771–869; these read PPSQ…TQDS, AVRM…IPEE, and PPQG…FPPA. Over residues 646–655 the composition is skewed to polar residues; it reads PVQTQDSSLS. N-linked (GlcNAc...) asparagine glycans are attached at residues asparagine 784, asparagine 813, and asparagine 820. A helical membrane pass occupies residues 892–912; it reads AFLAGSSAACGALLLGFCAAL. The Cytoplasmic portion of the chain corresponds to 913-1402; it reads YRRQKQRKEL…PGRNRREEPR (490 aa). Disordered stretches follow at residues 965 to 989, 1032 to 1307, and 1340 to 1402; these read SWPH…NPDP, FHGG…VVQA, and GRPS…EEPR. Polar residues-rich tracts occupy residues 1038 to 1049 and 1142 to 1152; these read QHSSGDPSTWSQ and PSPTSSYGQQS. Residues 1158-1169 show a composition bias toward pro residues; sequence PSPPDPPQPPTD. 2 stretches are compositionally biased toward low complexity: residues 1178–1191 and 1215–1228; these read RRVP…LSVS and ASPS…SSAP. Over residues 1243–1254 the composition is skewed to basic residues; that stretch reads HGHRARIRKKPK. Serine 1263 carries the post-translational modification Phosphoserine. Over residues 1294–1304 the composition is skewed to basic and acidic residues; sequence LERERSGERRV. A compositionally biased stretch (polar residues) spans 1346 to 1357; it reads SHGQGTSTCSTA. Positions 1358–1371 are enriched in low complexity; the sequence is GSNSSRGSNSSRGS.

Belongs to the immunoglobulin superfamily. ROBO family. Interacts (via Fibronectin type-III 1 domain) with NELL2 (via the EGF domains) with a 3:3 stoichiometry; this interaction promotes oligomerization of ROBO3 resulting in the repulsion of commissural axons in the midline. Detected in embryonal spinal cord and hindbrain.

Its subcellular location is the membrane. In terms of biological role, receptor involved in axon guidance during development. Acts as a multifunctional regulator of pathfinding that simultaneously mediates NELL2 repulsion, inhibits SLIT repulsion, and facilitates Netrin-1/NTN1 attraction. In spinal cord development plays a role in guiding commissural axons probably by preventing premature sensitivity to Slit proteins thus inhibiting Slit signaling through ROBO1/ROBO2. Binding OF NELL2 to the receptor ROBO3 promotes oligomerization of ROBO3, resulting in the repulsion of commissural axons in the midline. ROBO3 also indirectly boosts axon attraction to NTN1 without interacting with NTN1 itself. Functionally, mediates NELL2 premature repulsion of commissural axons during midline crossing. After midline crossing by the commissural axons, may, in concert with ROBO1 and ROBO2, prevent midline recrossing. Does not mediate NELL2 signaling. This is Roundabout homolog 3 from Mus musculus (Mouse).